The following is a 630-amino-acid chain: Probable potassium transport system protein Kup (630 aa).

12 helical membrane passes run 17-37 (LAIA…LYSL), 51-71 (PSAI…VVGI), 105-125 (ITGL…GDAV), 144-164 (PQLS…LFWI), 175-195 (LFGP…IYHI), 218-238 (VLLA…AEAL), 255-275 (YVLV…LLLL), 283-303 (PFFL…STVA), 344-364 (IYVP…VIGF), 374-394 (YGIA…VVMV), 402-422 (LLVA…FGAN), and 428-448 (QGGW…MTWY).

The protein belongs to the HAK/KUP transporter (TC 2.A.72) family.

Its subcellular location is the cell inner membrane. The enzyme catalyses K(+)(in) + H(+)(in) = K(+)(out) + H(+)(out). Transport of potassium into the cell. Likely operates as a K(+):H(+) symporter. The sequence is that of Probable potassium transport system protein Kup from Burkholderia pseudomallei (strain 1710b).